Here is a 502-residue protein sequence, read N- to C-terminus: Probable cytosol aminopeptidase (502 aa).

Lys-265 and Asp-270 together coordinate Mn(2+). Lys-277 is a catalytic residue. Residues Asp-288, Asp-347, and Glu-349 each contribute to the Mn(2+) site. Residue Arg-351 is part of the active site.

It belongs to the peptidase M17 family. Mn(2+) serves as cofactor.

It is found in the cytoplasm. The catalysed reaction is Release of an N-terminal amino acid, Xaa-|-Yaa-, in which Xaa is preferably Leu, but may be other amino acids including Pro although not Arg or Lys, and Yaa may be Pro. Amino acid amides and methyl esters are also readily hydrolyzed, but rates on arylamides are exceedingly low.. It catalyses the reaction Release of an N-terminal amino acid, preferentially leucine, but not glutamic or aspartic acids.. In terms of biological role, presumably involved in the processing and regular turnover of intracellular proteins. Catalyzes the removal of unsubstituted N-terminal amino acids from various peptides. The protein is Probable cytosol aminopeptidase of Rickettsia bellii (strain OSU 85-389).